The following is a 231-amino-acid chain: Vacuolar protein sorting-associated protein 24 (231 aa).

A compositionally biased stretch (basic and acidic residues) spans 184–195; the sequence is KAADAATHREQS. Positions 184 to 214 are disordered; it reads KAADAATHREQSLKQALPSLSNGIAKDSTEI.

This sequence belongs to the SNF7 family. As to quaternary structure, component of the endosomal sorting required for transport complex III (ESCRT-III).

It localises to the endosome membrane. The protein localises to the endomembrane system. In terms of biological role, class E VPS protein implicated in concentration and sorting of cargo proteins of the multivesicular body (MVB) for incorporation into intralumenal vesicles. The lumenal sequestrated membrane proteins will be targeted into the vacuole after fusion of the endosome with the vacuole. This chain is Vacuolar protein sorting-associated protein 24 (vps24), found in Schizosaccharomyces pombe (strain 972 / ATCC 24843) (Fission yeast).